The primary structure comprises 251 residues: MAGETLRKIQSLLGEMVASFIFGFAVYSAILGSTIAQQPAAKVIIGLTVGFSAIGIIYSFSDVTIAHFNPAITLAAILTGKMGILCGLGYMLAQCVGFILAVCALLVCSPVGYKETLNVIRPAPAPFGADNLNVFFTEFFLTAILVHIAFAVAVNPYRPKVDTDGKFVDPDEKEPVDRRITAPLCIGLTLGFLAFMGLVTSGGAFNPGLTLAPVIMSNTWQHFWLYLGAQYLGGLVGGLLQVFVLYKLSSN.

Over 1–11 (MAGETLRKIQS) the chain is Cytoplasmic. Residues 12-32 (LLGEMVASFIFGFAVYSAILG) traverse the membrane as a helical segment. Topologically, residues 33–42 (STIAQQPAAK) are extracellular. A helical transmembrane segment spans residues 43-63 (VIIGLTVGFSAIGIIYSFSDV). Over 64 to 86 (TIAHFNPAITLAAILTGKMGILC) the chain is Cytoplasmic. The short motif at 69 to 71 (NPA) is the NPA element. The chain crosses the membrane as a helical span at residues 87-107 (GLGYMLAQCVGFILAVCALLV). The Extracellular portion of the chain corresponds to 108–133 (CSPVGYKETLNVIRPAPAPFGADNLN). The helical transmembrane segment at 134–154 (VFFTEFFLTAILVHIAFAVAV) threads the bilayer. The Cytoplasmic segment spans residues 155–179 (NPYRPKVDTDGKFVDPDEKEPVDRR). Residues 180–200 (ITAPLCIGLTLGFLAFMGLVT) traverse the membrane as a helical segment. Topologically, residues 201–224 (SGGAFNPGLTLAPVIMSNTWQHFW) are extracellular. The NPG signature appears at 206–208 (NPG). A helical transmembrane segment spans residues 225–245 (LYLGAQYLGGLVGGLLQVFVL). The Cytoplasmic segment spans residues 246–251 (YKLSSN).

Belongs to the MIP/aquaporin (TC 1.A.8) family.

The protein resides in the cell membrane. Functionally, water channel required to facilitate the transport of water across membranes. Involved in osmotolerance. The polypeptide is Aquaporin (AQP) (Encephalitozoon hellem (Microsporidian parasite)).